The primary structure comprises 309 residues: Glutaminase 2 (309 aa).

7 residues coordinate substrate: S65, N117, E162, N169, Y193, Y245, and V263.

It belongs to the glutaminase family. Homotetramer.

The catalysed reaction is L-glutamine + H2O = L-glutamate + NH4(+). This chain is Glutaminase 2, found in Bacillus subtilis (strain 168).